A 230-amino-acid polypeptide reads, in one-letter code: Ribonuclease HII (230 aa).

The region spanning 21–212 (GPVAGVDEVG…VRRVANGSGG (192 aa)) is the RNase H type-2 domain. A divalent metal cation-binding residues include aspartate 27, glutamate 28, and aspartate 121.

The protein belongs to the RNase HII family. The cofactor is Mn(2+). It depends on Mg(2+) as a cofactor.

The protein localises to the cytoplasm. The enzyme catalyses Endonucleolytic cleavage to 5'-phosphomonoester.. Endonuclease that specifically degrades the RNA of RNA-DNA hybrids. The sequence is that of Ribonuclease HII from Mycobacterium avium (strain 104).